A 44-amino-acid chain; its full sequence is MQDIKTYLSTAPVLTTLWFGSLAGLLIEINRLFPDALSFPFFSS.

Residues 7–27 (YLSTAPVLTTLWFGSLAGLLI) form a helical membrane-spanning segment.

This sequence belongs to the PsaJ family.

It localises to the plastid. The protein resides in the chloroplast thylakoid membrane. Its function is as follows. May help in the organization of the PsaE and PsaF subunits. This Phalaenopsis aphrodite subsp. formosana (Moth orchid) protein is Photosystem I reaction center subunit IX.